The following is a 686-amino-acid chain: Amyloid-beta-like protein (686 aa).

Positions 1 to 21 are cleaved as a signal peptide; it reads MTVGKLMIGLLIPILVATVYA. The Extracellular segment spans residues 22 to 621; the sequence is EGSPAGSKRH…VERSASSVFQ (600 aa). A GFLD subdomain region spans residues 32–125; it reads EKFIPMVAFS…PYHCIDGEFH (94 aa). The 166-residue stretch at 32 to 197 folds into the E1 domain; sequence EKFIPMVAFS…TGVEFVCCPN (166 aa). 6 disulfide bridges follow: Cys-42–Cys-65, Cys-76–Cys-119, Cys-101–Cys-108, Cys-135–Cys-195, Cys-146–Cys-182, and Cys-160–Cys-194. The N-linked (GlcNAc...) asparagine glycan is linked to Asn-84. The interval 133-197 is cuBD subdomain; sequence HDCQFSHVNS…TGVEFVCCPN (65 aa). N-linked (GlcNAc...) asparagine glycosylation occurs at Asn-201. Positions 201–245 are disordered; sequence NKTDVQKTKEDEDDDDDEDDAYEDDYSEESDEKDEEEPSSQDPYF. Acidic residues predominate over residues 211 to 239; the sequence is DEDDDDDEDDAYEDDYSEESDEKDEEEPS. An E2 domain is found at 240–440; sequence SQDPYFKIAN…KYVRPIAVTY (201 aa). Asn-249 carries N-linked (GlcNAc...) asparagine glycosylation. Heparin contacts are provided by residues 252 to 255 and His-382; that span reads NEHD. Asn-417 carries N-linked (GlcNAc...) asparagine glycosylation. Disordered regions lie at residues 479 to 526 and 550 to 585; these read PTTT…DMKK and KLVE…NIKE. Over residues 500-516 the composition is skewed to acidic residues; that stretch reads SDSEEEADEYYEDEDDE. Residues 517-526 are compositionally biased toward basic and acidic residues; the sequence is QVKKTPDMKK. The span at 558-567 shows a compositional bias: acidic residues; that stretch reads TDDEDDDEDS. The chain crosses the membrane as a helical span at residues 622 to 642; that stretch reads PYVLASAMFITAICIIAFAIT. The Cytoplasmic portion of the chain corresponds to 643-686; sequence NARRRRAMRGFIEVDVYTPEERHVAGMQVNGYENPTYSFFDSKA. Residues 674–679 carry the YENPXY motif motif; it reads YENPTY.

The protein belongs to the APP family. As to quaternary structure, interacts (via cytoplasmic domain) with feh-1 (via PID 2 domain). Extracellular region is proteolytically cleaved. Expressed in the head, pharynx, spermatheca, uterus, vulva, tail and ventral neurons. Specifically expressed in nerve ring interneurons, the ventral cord, socket and amphids in the head, with strong expression in junctional cells, including the pharyngeal intestinal valve and uterine seam junction, and the excretory cell and weak expression in epidermal epithelial cells, including hyp7 cells, vulval cells, rectal valve cells, pharyngeal arcade cells and the tail hypodermis.

The protein localises to the membrane. The protein resides in the early endosome. In terms of biological role, required for normal developmental progression throughout all life stages. Specifically required for the molt stage during all larval transitions and morphogenesis. Acts with heterochronic genes, including members of the let-7 family, to regulate larval stage to adult transition. Acts synergistically with acn-1 in let-7 regulated postembryonic cell division of hypodermal seam cells. Acts in multiple pathways to influence daf-12 and daf-16 activity to in turn regulate physiological and reproductive processes such as body size and egg-laying. May play a role in neurotransmission. This Caenorhabditis elegans protein is Amyloid-beta-like protein.